Reading from the N-terminus, the 586-residue chain is Serine/threonine-protein phosphatase 2A 56 kDa regulatory subunit delta isoform (586 aa).

The disordered stretch occupies residues 1–80 (MSPSPSSSGK…QSSSRFNLSK (80 aa)). Tandem repeats lie at residues 21–22 (QP), 23–24 (QP), 25–26 (QP), 27–28 (QP), 29–30 (QP), and 31–32 (QP). An 8 X 2 AA approximate tandem repeats of Q-P region spans residues 21 to 36 (QPQPQPQPQPQPQSQP). Positions 23–35 (QPQPQPQPQPQSQ) are enriched in pro residues. A 7; approximate repeat occupies 33-34 (QS). Residues 35-36 (QP) form repeat 8. The span at 36–45 (PPSSNKRPSN) shows a compositional bias: low complexity. A Phosphothreonine modification is found at T47. Phosphoserine is present on residues S72, S73, and S74. The short motif at 507–514 (RAPPPLPP) is the SH3-binding; class I element. The Nuclear localization signal signature appears at 532–549 (KRTVETEAVQMLKDIKKE). Phosphoserine occurs at positions 557 and 582.

Belongs to the phosphatase 2A regulatory subunit B56 family. PP2A consists of a common heterodimeric core enzyme, composed of a 36 kDa catalytic subunit (subunit C) and a 65 kDa constant regulatory subunit (PR65 or subunit A), that associates with a variety of regulatory subunits. Proteins that associate with the core dimer include three families of regulatory subunits B (the R2/B/PR55/B55, R3/B''/PR72/PR130/PR59 and R5/B'/B56 families), the 48 kDa variable regulatory subunit, viral proteins, and cell signaling molecules. Interacts with the PP2A A subunit PPP2R1A. Interacts with SGO1. Interacts with ADCY8. As to expression, highly expressed in brain.

It is found in the nucleus. The B regulatory subunit might modulate substrate selectivity and catalytic activity, and might also direct the localization of the catalytic enzyme to a particular subcellular compartment. This Oryctolagus cuniculus (Rabbit) protein is Serine/threonine-protein phosphatase 2A 56 kDa regulatory subunit delta isoform (PPP2R5D).